The following is a 75-amino-acid chain: Meucin-49 (75 aa).

An N-terminal signal peptide occupies residues 1–22 (MNKKILLVIFIVTMLIVDEVNS).

It belongs to the non-disulfide-bridged peptide (NDBP) superfamily. Long chain multifunctional peptide (group 2) family. In terms of tissue distribution, expressed by the venom gland.

The protein resides in the secreted. In terms of biological role, insecticidal toxin and antimicrobial peptide with potent activity against both Gram-negative and -positive bacteria, as well as against fungi. Acts by disrupting bacterial membrane integrity. Shows broad-spectrum and highly potent bactericidal activities against the Gram-positive bacteria B.cereus, B.megaterium, B.subtilis, M.luteus, S.aureus, S.epidermidis, S.warneri, S.griseus, S.scabiei, S.mutans, S.salivarius, and S.sanguinis. Also exhibits a wide spectrum of activity against the Gram-negative bacteria A.faecalis, E.coli, P.aeruginosa, P.solanacearum, S.enterica, S.marcescens, and S.maltophilia. Also shows antimicrobial activities against the fungal strains Aspergillus flavus, A.fumigatus, A.nidulans, A.niger, Beauveria bassiana, and Saccharomyces cerevisiae. Its antibiotic activity is potentiated by other antibacterial peptides such as MeuNaTxbeta-4. Also induces cytolysis on mice, lizards and birds erythrocytes. This chain is Meucin-49, found in Mesobuthus eupeus (Lesser Asian scorpion).